We begin with the raw amino-acid sequence, 307 residues long: Methionyl-tRNA formyltransferase (307 aa).

108–111 serves as a coordination point for (6S)-5,6,7,8-tetrahydrofolate; it reads SLLP.

This sequence belongs to the Fmt family.

The enzyme catalyses L-methionyl-tRNA(fMet) + (6R)-10-formyltetrahydrofolate = N-formyl-L-methionyl-tRNA(fMet) + (6S)-5,6,7,8-tetrahydrofolate + H(+). Its function is as follows. Attaches a formyl group to the free amino group of methionyl-tRNA(fMet). The formyl group appears to play a dual role in the initiator identity of N-formylmethionyl-tRNA by promoting its recognition by IF2 and preventing the misappropriation of this tRNA by the elongation apparatus. This is Methionyl-tRNA formyltransferase from Xanthomonas oryzae pv. oryzae (strain MAFF 311018).